A 221-amino-acid polypeptide reads, in one-letter code: MAADTPGKPSASPMAGAPASASRTPDKPRSAAEHRKSSKPVMEKRRRARINESLAQLKTLILDALRKESSRHSKLEKADILEMTVRHLRSLRRVQVTAALSADPAVLGKYRAGFHECLAEVNRFLAGCEGVPADVRSRLLGHLAACLRQLGPSRRPASLSPAAPAEAPAPEVYAGRPLLPSLGGPFPLLAPPLLPGLTRALPAAPRAGPQGPGGPWRPWLR.

Residues 1 to 22 (MAADTPGKPSASPMAGAPASAS) are compositionally biased toward low complexity. The tract at residues 1–49 (MAADTPGKPSASPMAGAPASASRTPDKPRSAAEHRKSSKPVMEKRRRAR) is disordered. Over residues 24–35 (TPDKPRSAAEHR) the composition is skewed to basic and acidic residues. The 58-residue stretch at 34–91 (HRKSSKPVMEKRRRARINESLAQLKTLILDALRKESSRHSKLEKADILEMTVRHLRSL) folds into the bHLH domain. The Orange domain occupies 110–143 (YRAGFHECLAEVNRFLAGCEGVPADVRSRLLGHL). Residues 201–221 (LPAAPRAGPQGPGGPWRPWLR) are disordered. Positions 216–219 (WRPW) match the WRPW motif motif.

As to quaternary structure, transcription repression requires formation of a complex with a corepressor protein of the Groucho/TLE family.

The protein resides in the nucleus. Its function is as follows. Transcriptional repressor. Binds DNA on N-box motifs: 5'-CACNAG-3'. The protein is Transcription factor HES-4 (HES4) of Homo sapiens (Human).